The primary structure comprises 251 residues: Ubiquinone/menaquinone biosynthesis C-methyltransferase UbiE (251 aa).

S-adenosyl-L-methionine contacts are provided by residues Thr74, Asp95, and 123–124; that span reads NA.

The protein belongs to the class I-like SAM-binding methyltransferase superfamily. MenG/UbiE family.

The catalysed reaction is a 2-demethylmenaquinol + S-adenosyl-L-methionine = a menaquinol + S-adenosyl-L-homocysteine + H(+). It catalyses the reaction a 2-methoxy-6-(all-trans-polyprenyl)benzene-1,4-diol + S-adenosyl-L-methionine = a 5-methoxy-2-methyl-3-(all-trans-polyprenyl)benzene-1,4-diol + S-adenosyl-L-homocysteine + H(+). Its pathway is quinol/quinone metabolism; menaquinone biosynthesis; menaquinol from 1,4-dihydroxy-2-naphthoate: step 2/2. The protein operates within cofactor biosynthesis; ubiquinone biosynthesis. Methyltransferase required for the conversion of demethylmenaquinol (DMKH2) to menaquinol (MKH2) and the conversion of 2-polyprenyl-6-methoxy-1,4-benzoquinol (DDMQH2) to 2-polyprenyl-3-methyl-6-methoxy-1,4-benzoquinol (DMQH2). The chain is Ubiquinone/menaquinone biosynthesis C-methyltransferase UbiE from Shewanella sp. (strain ANA-3).